A 270-amino-acid chain; its full sequence is Glucosamine-6-phosphate deaminase (270 aa).

The Proton acceptor; for enolization step role is filled by D68. Residue D145 is the For ring-opening step of the active site. H147 serves as the catalytic Proton acceptor; for ring-opening step. E152 acts as the For ring-opening step in catalysis.

This sequence belongs to the glucosamine/galactosamine-6-phosphate isomerase family. NagB subfamily.

It carries out the reaction alpha-D-glucosamine 6-phosphate + H2O = beta-D-fructose 6-phosphate + NH4(+). Its pathway is amino-sugar metabolism; N-acetylneuraminate degradation; D-fructose 6-phosphate from N-acetylneuraminate: step 5/5. In terms of biological role, catalyzes the reversible isomerization-deamination of glucosamine 6-phosphate (GlcN6P) to form fructose 6-phosphate (Fru6P) and ammonium ion. The sequence is that of Glucosamine-6-phosphate deaminase from Bifidobacterium longum subsp. infantis (strain ATCC 15697 / DSM 20088 / JCM 1222 / NCTC 11817 / S12).